Here is a 249-residue protein sequence, read N- to C-terminus: Ribonuclease 3 (249 aa).

The 130-residue stretch at Phe-20 to Gly-149 folds into the RNase III domain. Glu-62 contacts Mg(2+). Asp-66 is a catalytic residue. Positions 135 and 138 each coordinate Mg(2+). Glu-138 is a catalytic residue. The region spanning Asp-175–Lys-244 is the DRBM domain. Positions Arg-225–Gln-249 are disordered.

It belongs to the ribonuclease III family. Homodimer. The cofactor is Mg(2+).

The protein localises to the cytoplasm. It carries out the reaction Endonucleolytic cleavage to 5'-phosphomonoester.. Digests double-stranded RNA. Involved in the processing of primary rRNA transcript to yield the immediate precursors to the large and small rRNAs (23S and 16S). Processes some mRNAs, and tRNAs when they are encoded in the rRNA operon. Processes pre-crRNA and tracrRNA of type II CRISPR loci if present in the organism. In Bacillus licheniformis (strain ATCC 14580 / DSM 13 / JCM 2505 / CCUG 7422 / NBRC 12200 / NCIMB 9375 / NCTC 10341 / NRRL NRS-1264 / Gibson 46), this protein is Ribonuclease 3.